Reading from the N-terminus, the 1394-residue chain is DNA-directed RNA polymerase subunit beta'' (1394 aa).

Zn(2+)-binding residues include Cys224, Cys295, Cys302, and Cys305.

It belongs to the RNA polymerase beta' chain family. RpoC2 subfamily. In terms of assembly, in plastids the minimal PEP RNA polymerase catalytic core is composed of four subunits: alpha, beta, beta', and beta''. When a (nuclear-encoded) sigma factor is associated with the core the holoenzyme is formed, which can initiate transcription. It depends on Zn(2+) as a cofactor.

The protein localises to the plastid. The protein resides in the chloroplast. The enzyme catalyses RNA(n) + a ribonucleoside 5'-triphosphate = RNA(n+1) + diphosphate. Functionally, DNA-dependent RNA polymerase catalyzes the transcription of DNA into RNA using the four ribonucleoside triphosphates as substrates. This Vitis vinifera (Grape) protein is DNA-directed RNA polymerase subunit beta''.